A 35-amino-acid polypeptide reads, in one-letter code: Potassium channel toxin alpha-KTx 6.1 (35 aa).

4 cysteine pairs are disulfide-bonded: Cys4–Cys25, Cys10–Cys30, Cys14–Cys32, and Cys20–Cys35.

Belongs to the short scorpion toxin superfamily. Potassium channel inhibitor family. Alpha-KTx 06 subfamily. In terms of tissue distribution, expressed by the venom gland.

Its subcellular location is the secreted. Its function is as follows. Potently and reversibly inhibits the insect voltage-gated Shaker (Sh) potassium channel (isoform alpha (B)), the mammalian voltage-gated potassium channels Kv1.2/KCNA2 (IC(50)=0.44 nM), and the calcium-activated potassium channel KCa2.3/KCNN3 (Kd=330 nM). Its effect on Kv1.3/KCNA3 is controversial, since this channel is voltage-independently inhibited in PubMed:9464266, but is not affected in PubMed:10931199. Furthermore, this toxin competes with apamin (a small conductance calcium-activated potassium channel inhibitor) for binding to rat brain synaptosomes. This is Potassium channel toxin alpha-KTx 6.1 from Pandinus imperator (Emperor scorpion).